A 562-amino-acid polypeptide reads, in one-letter code: BOS complex subunit NCLN (562 aa).

The N-terminal stretch at 1–41 (MLEEAGEVLESVLKASCLPLSFLLFVPAVLLLLGPPPAAEA) is a signal peptide. Over 42–521 (AHESTVYRMQ…VMNAYRVKPA (480 aa)) the chain is Extracellular. N240 carries an N-linked (GlcNAc...) asparagine glycan. A disordered region spans residues 420-447 (GFDEGHLQPNREGSTCRSADLHGSDADP). A helical transmembrane segment spans residues 522–542 (IFDLLLAVCIAAYLGVAYVAV). Residues 543 to 562 (QNFGLLYRMIQRLSLKTKQQ) lie on the Cytoplasmic side of the membrane.

Belongs to the nicastrin family. In terms of assembly, component of the multi-pass translocon (MPT) complex.

The protein localises to the endoplasmic reticulum membrane. Its function is as follows. Component of the multi-pass translocon (MPT) complex that mediates insertion of multi-pass membrane proteins into the lipid bilayer of membranes. The MPT complex takes over after the SEC61 complex: following membrane insertion of the first few transmembrane segments of proteins by the SEC61 complex, the MPT complex occludes the lateral gate of the SEC61 complex to promote insertion of subsequent transmembrane regions. May antagonize Nodal signaling and subsequent organization of axial structures during mesodermal patterning, via its interaction with NOMO. The polypeptide is BOS complex subunit NCLN (NCLN) (Gallus gallus (Chicken)).